Consider the following 238-residue polypeptide: MSTHIDAPKGAIADVVLLPGDPLRAQYIAENFLDNAQRYNTVRNAFGFTGTFEGRRVSVQATGMGIPSISIYVNELIQDYGVKTLIRVGTAGGMGENVKVRDVVLAQGSSTDSSIILNTFGAGLYFAPLADFNLLREAANLADTSAIRYHVGNVLGEDRFYNDEMDRQKLIDYEVLATEMETPALYLLAAKYHVHALSILTVSNHLVTGEETSAQERQTSFNDMIGLALGVAKTVPDR.

His-4 provides a ligand contact to a purine D-ribonucleoside. Phosphate-binding positions include Gly-20, Arg-24, Arg-43, and 87-90 (RVGT). A purine D-ribonucleoside is bound by residues 179–181 (EME) and 203–204 (SN).

It belongs to the PNP/UDP phosphorylase family. As to quaternary structure, homohexamer; trimer of homodimers.

The enzyme catalyses a purine D-ribonucleoside + phosphate = a purine nucleobase + alpha-D-ribose 1-phosphate. It carries out the reaction a purine 2'-deoxy-D-ribonucleoside + phosphate = a purine nucleobase + 2-deoxy-alpha-D-ribose 1-phosphate. Catalyzes the reversible phosphorolytic breakdown of the N-glycosidic bond in the beta-(deoxy)ribonucleoside molecules, with the formation of the corresponding free purine bases and pentose-1-phosphate. This Lacticaseibacillus casei (strain BL23) (Lactobacillus casei) protein is Purine nucleoside phosphorylase DeoD-type.